A 367-amino-acid chain; its full sequence is tRNA pseudouridine synthase D (367 aa).

Aspartate 80 functions as the Nucleophile in the catalytic mechanism. The TRUD domain maps to 156–316 (GIPNWFGEQR…LKQERRALRL (161 aa)).

The protein belongs to the pseudouridine synthase TruD family.

It catalyses the reaction uridine(13) in tRNA = pseudouridine(13) in tRNA. Functionally, responsible for synthesis of pseudouridine from uracil-13 in transfer RNAs. The protein is tRNA pseudouridine synthase D of Xanthomonas campestris pv. campestris (strain B100).